An 876-amino-acid polypeptide reads, in one-letter code: SED5-binding protein 2 (876 aa).

S51 carries the post-translational modification Phosphoserine. The zinc finger-like stretch occupies residues C164–C189. The segment covering V300–N324 has biased composition (acidic residues). Residues V300–E326 are disordered.

The protein belongs to the SEC23/SEC24 family. SEC24 subfamily. COPII is composed of at least five proteins: the SEC23/24 complex, the SEC13/31 complex and SAR1. Interacts with GRH1.

The protein resides in the cytoplasm. The protein localises to the golgi apparatus membrane. Its subcellular location is the endoplasmic reticulum membrane. Functionally, component of the COPII coat, that covers ER-derived vesicles involved in transport from the endoplasmic reticulum to the Golgi apparatus. COPII acts in the cytoplasm to promote the transport of secretory, plasma membrane, and vacuolar proteins from the endoplasmic reticulum to the Golgi complex. This is SED5-binding protein 2 (SFB2) from Saccharomyces cerevisiae (strain ATCC 204508 / S288c) (Baker's yeast).